Consider the following 77-residue polypeptide: Acyl carrier protein (77 aa).

The region spanning 1 to 76 (MATFDDVKAV…DVVNYIDNLK (76 aa)) is the Carrier domain. The residue at position 36 (Ser36) is an O-(pantetheine 4'-phosphoryl)serine.

This sequence belongs to the acyl carrier protein (ACP) family. Post-translationally, 4'-phosphopantetheine is transferred from CoA to a specific serine of apo-ACP by AcpS. This modification is essential for activity because fatty acids are bound in thioester linkage to the sulfhydryl of the prosthetic group.

Its subcellular location is the cytoplasm. It participates in lipid metabolism; fatty acid biosynthesis. Functionally, carrier of the growing fatty acid chain in fatty acid biosynthesis. The polypeptide is Acyl carrier protein (Campylobacter jejuni (strain RM1221)).